Here is a 154-residue protein sequence, read N- to C-terminus: Large ribosomal subunit protein uL13 (154 aa).

The tract at residues 131 to 154 (DHKHEAQQPEVVDFKSMNSKNTRG) is disordered.

Belongs to the universal ribosomal protein uL13 family. As to quaternary structure, part of the 50S ribosomal subunit.

Functionally, this protein is one of the early assembly proteins of the 50S ribosomal subunit, although it is not seen to bind rRNA by itself. It is important during the early stages of 50S assembly. The chain is Large ribosomal subunit protein uL13 from Maricaulis maris (strain MCS10) (Caulobacter maris).